The primary structure comprises 879 residues: Alanine--tRNA ligase (879 aa).

His-566, His-570, Cys-668, and His-672 together coordinate Zn(2+).

The protein belongs to the class-II aminoacyl-tRNA synthetase family. Requires Zn(2+) as cofactor.

Its subcellular location is the cytoplasm. It carries out the reaction tRNA(Ala) + L-alanine + ATP = L-alanyl-tRNA(Ala) + AMP + diphosphate. Its function is as follows. Catalyzes the attachment of alanine to tRNA(Ala) in a two-step reaction: alanine is first activated by ATP to form Ala-AMP and then transferred to the acceptor end of tRNA(Ala). Also edits incorrectly charged Ser-tRNA(Ala) and Gly-tRNA(Ala) via its editing domain. The protein is Alanine--tRNA ligase of Clostridium beijerinckii (strain ATCC 51743 / NCIMB 8052) (Clostridium acetobutylicum).